The following is a 72-amino-acid chain: NAD(P)H-quinone oxidoreductase subunit O (72 aa).

Belongs to the complex I NdhO subunit family. NDH-1 can be composed of about 15 different subunits; different subcomplexes with different compositions have been identified which probably have different functions.

Its subcellular location is the cellular thylakoid membrane. It catalyses the reaction a plastoquinone + NADH + (n+1) H(+)(in) = a plastoquinol + NAD(+) + n H(+)(out). The enzyme catalyses a plastoquinone + NADPH + (n+1) H(+)(in) = a plastoquinol + NADP(+) + n H(+)(out). Its function is as follows. NDH-1 shuttles electrons from an unknown electron donor, via FMN and iron-sulfur (Fe-S) centers, to quinones in the respiratory and/or the photosynthetic chain. The immediate electron acceptor for the enzyme in this species is believed to be plastoquinone. Couples the redox reaction to proton translocation, and thus conserves the redox energy in a proton gradient. Cyanobacterial NDH-1 also plays a role in inorganic carbon-concentration. The polypeptide is NAD(P)H-quinone oxidoreductase subunit O (Rippkaea orientalis (strain PCC 8801 / RF-1) (Cyanothece sp. (strain PCC 8801))).